The chain runs to 431 residues: MQKSEQLFARAQKHIPGGVNSPVRAFRAVGGTPPFIEKADGPYLYDADGKQYIDYVQSWGPMVLGHNNPIIRQAVIDAAQNGLSFGAPTEAEVTIADLVSELVPSMEMLRMVNSGTEATMSAIRLARGYTKRDKILKFEGCYHGHADALLVKAGSGALTFGVPSSPGIPADFAKHTLTMEYNNIDSVVQAFEQYPDDIACIIVEPVAGNMNCIPPVHGFLQGLRDVCDKYGAVLIFDEVMTGFRVALGGAQAKYNIVPDLTCLGKVIGGGMPVGAFGGKRDIMQHIAPSGPVYQAGTLSGNPVAMAAGLAALNQVKRPGLYEELSEATKTLAEGIKAIANGLGIPMSVNYAGSMFGLFFTDVECVTNYQQAINCNTEQFNHFYHGMLENGVYLAPASYEAGFVSAQHSPEIIQQTLQIAEKVLADVAKKFG.

Lys265 is modified (N6-(pyridoxal phosphate)lysine).

The protein belongs to the class-III pyridoxal-phosphate-dependent aminotransferase family. HemL subfamily. In terms of assembly, homodimer. Pyridoxal 5'-phosphate is required as a cofactor.

The protein localises to the cytoplasm. The enzyme catalyses (S)-4-amino-5-oxopentanoate = 5-aminolevulinate. It participates in porphyrin-containing compound metabolism; protoporphyrin-IX biosynthesis; 5-aminolevulinate from L-glutamyl-tRNA(Glu): step 2/2. In Pseudoalteromonas atlantica (strain T6c / ATCC BAA-1087), this protein is Glutamate-1-semialdehyde 2,1-aminomutase.